Consider the following 358-residue polypeptide: MSTRVVVGLSGGVDSAVAAYLLKQQGYDVLGVFMKNWDDDDNTEHCTARQDFLDVLAVADVLGIEVEAVNFAAEYKERVFSYFLAEYQAGRTPNPDVLCNAEIKFKAFLDDAIARGADYIATGHYVGKGHDTFGRAALLRARDANKDQSYFLYRLNQAQLSPALFPLARLPKPEVREIARRIGLPNAAKKDSTGICFIGERNFREFLERYLPRDPGDMTTPEGRVVGQHQGLMYYTLGQRQGLGIGGQKGGSDAPWFVAAKDMATNTLVVVQGHDHPLLQRFGVGAGQLSWIAGVAPDPERPYTAKTRYRQTDAACHITTLYDDTLELVFDAPQWAVTPGQSVVLYDGDVCLGGGIIC.

Residues 8-15 (GLSGGVDS) and M34 each bind ATP. The segment at 94–96 (NPD) is interaction with target base in tRNA. The active-site Nucleophile is C99. A disulfide bridge connects residues C99 and C196. ATP is bound at residue G123. The interaction with tRNA stretch occupies residues 146 to 148 (KDQ). The active-site Cysteine persulfide intermediate is the C196. The interval 308–309 (RY) is interaction with tRNA.

The protein belongs to the MnmA/TRMU family.

The protein localises to the cytoplasm. It catalyses the reaction S-sulfanyl-L-cysteinyl-[protein] + uridine(34) in tRNA + AH2 + ATP = 2-thiouridine(34) in tRNA + L-cysteinyl-[protein] + A + AMP + diphosphate + H(+). Its function is as follows. Catalyzes the 2-thiolation of uridine at the wobble position (U34) of tRNA, leading to the formation of s(2)U34. The protein is tRNA-specific 2-thiouridylase MnmA of Thiobacillus denitrificans (strain ATCC 25259 / T1).